Consider the following 373-residue polypeptide: 3-dehydroquinate synthase (373 aa).

Residues 67-72 (EGEETK), 101-105 (GVILD), 125-126 (TT), Lys-138, and Lys-147 each bind NAD(+). Residues Glu-180, His-240, and His-256 each coordinate Zn(2+).

This sequence belongs to the sugar phosphate cyclases superfamily. Dehydroquinate synthase family. The cofactor is NAD(+). Requires Co(2+) as cofactor. Zn(2+) serves as cofactor.

The protein localises to the cytoplasm. It carries out the reaction 7-phospho-2-dehydro-3-deoxy-D-arabino-heptonate = 3-dehydroquinate + phosphate. The protein operates within metabolic intermediate biosynthesis; chorismate biosynthesis; chorismate from D-erythrose 4-phosphate and phosphoenolpyruvate: step 2/7. Catalyzes the conversion of 3-deoxy-D-arabino-heptulosonate 7-phosphate (DAHP) to dehydroquinate (DHQ). The chain is 3-dehydroquinate synthase from Chlamydia trachomatis serovar L2 (strain ATCC VR-902B / DSM 19102 / 434/Bu).